A 401-amino-acid polypeptide reads, in one-letter code: Probable tRNA sulfurtransferase (401 aa).

Residues 60 to 165 enclose the THUMP domain; that stretch reads EPIIDKLKTV…QDGTYVTCHD (106 aa). Residues 183 to 184, 208 to 209, R265, G287, and Q296 contribute to the ATP site; these read ML and HF.

Belongs to the ThiI family.

The protein resides in the cytoplasm. The enzyme catalyses [ThiI sulfur-carrier protein]-S-sulfanyl-L-cysteine + a uridine in tRNA + 2 reduced [2Fe-2S]-[ferredoxin] + ATP + H(+) = [ThiI sulfur-carrier protein]-L-cysteine + a 4-thiouridine in tRNA + 2 oxidized [2Fe-2S]-[ferredoxin] + AMP + diphosphate. It catalyses the reaction [ThiS sulfur-carrier protein]-C-terminal Gly-Gly-AMP + S-sulfanyl-L-cysteinyl-[cysteine desulfurase] + AH2 = [ThiS sulfur-carrier protein]-C-terminal-Gly-aminoethanethioate + L-cysteinyl-[cysteine desulfurase] + A + AMP + 2 H(+). Its pathway is cofactor biosynthesis; thiamine diphosphate biosynthesis. Catalyzes the ATP-dependent transfer of a sulfur to tRNA to produce 4-thiouridine in position 8 of tRNAs, which functions as a near-UV photosensor. Also catalyzes the transfer of sulfur to the sulfur carrier protein ThiS, forming ThiS-thiocarboxylate. This is a step in the synthesis of thiazole, in the thiamine biosynthesis pathway. The sulfur is donated as persulfide by IscS. The sequence is that of Probable tRNA sulfurtransferase from Geobacillus thermodenitrificans (strain NG80-2).